The sequence spans 790 residues: uncharacterized protein (790 aa).

The TBDR plug domain maps to 37 to 172 (APVPVPVNGN…NGGVIDAKIK (136 aa)). The 613-residue stretch at 178–790 (DSKVKLGYRT…TFWLDVSMKF (613 aa)) folds into the TBDR beta-barrel domain.

The protein belongs to the TonB-dependent receptor family.

It localises to the cell outer membrane. This is an uncharacterized protein from Escherichia coli (strain K12).